Here is a 409-residue protein sequence, read N- to C-terminus: Transcription termination factor 3, mitochondrial (409 aa).

The transit peptide at 1–64 (MALLAQQLSR…KTDRALFSWS (64 aa)) directs the protein to the mitochondrion. The disordered stretch occupies residues 74 to 93 (RKSSTNSTLLPSVSEQPEKI).

Belongs to the mTERF family.

Its subcellular location is the mitochondrion. In terms of biological role, binds promoter DNA and regulates initiation of transcription. Required for normal mitochondrial transcription and translation, and for normal assembly of mitochondrial respiratory complexes. Required for normal mitochondrial function. Maintains 16S rRNA levels and functions in mitochondrial ribosome assembly by regulating the biogenesis of the 39S ribosomal subunit. The protein is Transcription termination factor 3, mitochondrial (Mterf3) of Rattus norvegicus (Rat).